The primary structure comprises 87 residues: Translation initiation factor IF-1 2 (87 aa).

The region spanning 1-72 is the S1-like domain; the sequence is MAKEEVIEME…TKGRINFRHK (72 aa).

It belongs to the IF-1 family. As to quaternary structure, component of the 30S ribosomal translation pre-initiation complex which assembles on the 30S ribosome in the order IF-2 and IF-3, IF-1 and N-formylmethionyl-tRNA(fMet); mRNA recruitment can occur at any time during PIC assembly.

Its subcellular location is the cytoplasm. In terms of biological role, one of the essential components for the initiation of protein synthesis. Stabilizes the binding of IF-2 and IF-3 on the 30S subunit to which N-formylmethionyl-tRNA(fMet) subsequently binds. Helps modulate mRNA selection, yielding the 30S pre-initiation complex (PIC). Upon addition of the 50S ribosomal subunit IF-1, IF-2 and IF-3 are released leaving the mature 70S translation initiation complex. This Thiobacillus denitrificans (strain ATCC 25259 / T1) protein is Translation initiation factor IF-1 2.